We begin with the raw amino-acid sequence, 337 residues long: Receptor like protein kinase S.3 (337 aa).

In terms of domain architecture, Protein kinase spans 50–316 (FKESELFGTE…VNYLEGNDVL (267 aa)). ATP-binding positions include 56–64 (FGTEANGTV) and K78. A Phosphotyrosine modification is found at Y123. Residue D171 is the Proton acceptor of the active site.

The protein belongs to the protein kinase superfamily. Ser/Thr protein kinase family.

It catalyses the reaction L-seryl-[protein] + ATP = O-phospho-L-seryl-[protein] + ADP + H(+). The catalysed reaction is L-threonyl-[protein] + ATP = O-phospho-L-threonyl-[protein] + ADP + H(+). The protein is Receptor like protein kinase S.3 (LECRKS3) of Arabidopsis thaliana (Mouse-ear cress).